Here is a 70-residue protein sequence, read N- to C-terminus: Alpha-conotoxin EIIB (70 aa).

A signal peptide spans 1 to 21; sequence MGMRMMFIVFLLVVLATTVVS. A propeptide spanning residues 22–51 is cleaved from the precursor; that stretch reads FTLDHVLGLASEGRNAKAIDNALDQRDPKR. Q52 carries the pyrrolidone carboxylic acid modification. P54 carries the post-translational modification Hydroxyproline. Cystine bridges form between C56–C62 and C57–C67. A Cysteine amide modification is found at C67.

In terms of tissue distribution, expressed by the venom duct.

The protein localises to the secreted. Alpha-conotoxins bind to the nicotinic acetylcholine receptors (nAChR) and inhibit them. This peptide potently blocks muscular nicotinic acetylcholine receptor (CHRNA1-CHRNB1-CHRNG-CHRND), and has no effect on neuronal receptors. It is able to totally displace [125I]-Bgtx from the Torpedo receptor with an inhibition constant (Ki) of 2.2 and 0.7 nM. This chain is Alpha-conotoxin EIIB, found in Conus ermineus (Agate cone).